A 94-amino-acid polypeptide reads, in one-letter code: Serine protease inhibitor Kazal-type 13 (94 aa).

A signal peptide spans 1-23; it reads MAAFPHKIIFFLVCSTLTHVAFS. Residues 33–94 form the Kazal-like domain; the sequence is RWPKPRCKMY…IKFEKYGKCD (62 aa). Disulfide bonds link C39-C75, C53-C72, and C61-C93. N-linked (GlcNAc...) asparagine glycosylation is present at N55.

It localises to the secreted. Functionally, may be a serine protease inhibitor. Essential for sperm maturation and fertility. Inhibits sperm acrosome reaction, protecting sperm from premature reaction. This is Serine protease inhibitor Kazal-type 13 (SPINK13) from Homo sapiens (Human).